Here is a 781-residue protein sequence, read N- to C-terminus: Catenin beta-1 (781 aa).

The segment at 34 to 56 (GIHSGATTTAPSLSGKGNPEDED) is disordered. ARM repeat units lie at residues 141 to 180 (NYQD…QLSK), 225 to 264 (REGL…NLLL), 267 to 306 (EGAK…ILAY), 351 to 390 (SSNK…NLSD), 391 to 429 (AATK…NLTC), 432 to 473 (YKNK…HLTS), 479 to 519 (EMAQ…NLAL), 521 to 562 (PANH…QFVE), 584 to 623 (IHNR…DVAQ), and 625 to 664 (KEAA…RMSE). Residues 735–745 (MDHDMGGHHPG) show a composition bias toward basic and acidic residues. The tract at residues 735–781 (MDHDMGGHHPGADYPVDGLPDLSHAQDLMDGLPPGDSNQLAWFDTDL) is disordered.

It belongs to the beta-catenin family. Interacts with EP-Cadherin/CDH3. Interacts with custos; the interaction is positively regulated by Wnt stimulation. Post-translationally, phosphorylation by gsk3b promotes ubiquitination and subsequent degradation by the proteasome. In terms of processing, ubiquitinated when phosphorylated by gsk3b, leading to its degradation. Expressed at intercalated disks in the heart (at protein level).

It is found in the cytoplasm. The protein resides in the nucleus. Its subcellular location is the cell membrane. Functionally, key downstream component of the canonical Wnt signaling pathway. In the absence of Wnt, forms a complex with axin1, axin2, apc, csnk1a1 and gsk3b that promotes phosphorylation on N-terminal Ser and Thr residues and ubiquitination of ctnnb1 and its subsequent degradation by the proteasome. In the presence of Wnt ligand, ctnnb1 is not ubiquitinated and accumulates in the nucleus, where it acts as a coactivator for transcription factors of the TCF/LEF family, leading to activate Wnt responsive genes. Plays a key role in dorsoventral patterning: in prospective ventral blastomeres, its down-regulation by axin1 and axin2 leads to inhibit the Wnt signaling pathway, while in prospective dorsal blastomeres, degradation of axin results in stabilization and nuclear translocation of ctnnb1. The chain is Catenin beta-1 from Xenopus laevis (African clawed frog).